The sequence spans 418 residues: Ankyrin repeat domain-containing protein 61 (418 aa).

8 ANK repeats span residues 27–57, 74–103, 131–160, 166–195, 199–228, 233–272, 276–305, and 309–342; these read ALHS…NQPL, QPIF…DPEV, TRIQ…QVNA, NKHS…QVNA, SSMT…NVNC, TGNT…QVNA, EGQT…NVNI, and NGES…PLRL.

The chain is Ankyrin repeat domain-containing protein 61 (Ankrd61) from Rattus norvegicus (Rat).